The following is a 259-amino-acid chain: Tumor necrosis factor receptor superfamily member 10C (259 aa).

Positions 1–25 (MARIPKTLKFVVVIVAVLLPVLAYS) are cleaved as a signal peptide. TNFR-Cys repeat units lie at residues 29–66 (ARQEEVPQQTVAPQQQRHSFKGEECPAGSHRSEHTGAC), 69–109 (CTEG…DTVC), and 110–149 (QCKEGTFRNENSPEMCRKCSRCPSGEVQVSNCTSWDDIQC). Over residues 30–45 (RQEEVPQQTVAPQQQR) the composition is skewed to polar residues. Residues 30–56 (RQEEVPQQTVAPQQQRHSFKGEECPAG) are disordered. 7 disulfide bridges follow: C53–C66, C69–C85, C88–C101, C91–C109, C111–C125, C128–C141, and C131–C149. The N-linked (GlcNAc...) (high mannose) asparagine glycan is linked to N77. 2 N-linked (GlcNAc...) (high mannose) asparagine glycosylation sites follow: N140 and N156. A disordered region spans residues 160–224 (ETPAAEETMN…TSPGTPAPAA (65 aa)). 5 TAPE repeats span residues 162 to 176 (PAAEETMNTSPGTPA), 177 to 191 (PAAEETMNTSPGTPA), 192 to 206 (PAAEETMTTSPGTPA), 207 to 221 (PAAEETMTTSPGTPA), and 222 to 236 (PAAEETMITSPGTPA). The segment covering 185-217 (TSPGTPAPAAEETMTTSPGTPAPAAEETMTTSP) has biased composition (low complexity). A236 carries GPI-anchor amidated alanine lipidation. The propeptide at 237–259 (SSHYLSCTIVGIIVLIVLLIVFV) is removed in mature form.

In terms of processing, N-glycosylated and O-glycosylated. As to expression, higher expression in normal tissues than in tumor cell lines. Highly expressed in peripheral blood lymphocytes, spleen, skeletal muscle, placenta, lung and heart.

The protein resides in the cell membrane. Receptor for the cytotoxic ligand TRAIL. Lacks a cytoplasmic death domain and hence is not capable of inducing apoptosis. May protect cells against TRAIL mediated apoptosis by competing with TRAIL-R1 and R2 for binding to the ligand. The sequence is that of Tumor necrosis factor receptor superfamily member 10C (TNFRSF10C) from Homo sapiens (Human).